We begin with the raw amino-acid sequence, 120 residues long: Large ribosomal subunit protein uL14 (120 aa).

This sequence belongs to the universal ribosomal protein uL14 family. In terms of assembly, part of the 50S ribosomal subunit. Forms a cluster with proteins L3 and L19. In the 70S ribosome, L14 and L19 interact and together make contacts with the 16S rRNA in bridges B5 and B8.

Functionally, binds to 23S rRNA. Forms part of two intersubunit bridges in the 70S ribosome. The chain is Large ribosomal subunit protein uL14 from Dictyoglomus turgidum (strain DSM 6724 / Z-1310).